Reading from the N-terminus, the 242-residue chain is Zinc import ATP-binding protein ZnuC (242 aa).

Positions 24 to 241 (INVKNLSFFY…EKFLKMFSSY (218 aa)) constitute an ABC transporter domain. 56-63 (GPNGGGKT) is a binding site for ATP.

This sequence belongs to the ABC transporter superfamily. Zinc importer (TC 3.A.1.15.5) family. As to quaternary structure, the complex is composed of two ATP-binding proteins (ZnuC), two transmembrane proteins (ZnuB) and a solute-binding protein (ZnuA).

Its subcellular location is the cell inner membrane. It carries out the reaction Zn(2+)(out) + ATP(in) + H2O(in) = Zn(2+)(in) + ADP(in) + phosphate(in) + H(+)(in). Functionally, part of the ABC transporter complex ZnuABC involved in zinc import. Responsible for energy coupling to the transport system. This chain is Zinc import ATP-binding protein ZnuC, found in Ehrlichia canis (strain Jake).